Here is a 449-residue protein sequence, read N- to C-terminus: Signal recognition particle protein (449 aa).

GTP is bound by residues 109–116, 191–195, and 249–252; these read GLQGSGKT, DTAGR, and SRID.

It belongs to the GTP-binding SRP family. SRP54 subfamily. As to quaternary structure, part of the signal recognition particle protein translocation system, which is composed of SRP and FtsY. SRP is a ribonucleoprotein composed of Ffh and a 4.5S RNA molecule.

The protein resides in the cytoplasm. It carries out the reaction GTP + H2O = GDP + phosphate + H(+). Involved in targeting and insertion of nascent membrane proteins into the cytoplasmic membrane. Binds to the hydrophobic signal sequence of the ribosome-nascent chain (RNC) as it emerges from the ribosomes. The SRP-RNC complex is then targeted to the cytoplasmic membrane where it interacts with the SRP receptor FtsY. Interaction with FtsY leads to the transfer of the RNC complex to the Sec translocase for insertion into the membrane, the hydrolysis of GTP by both Ffh and FtsY, and the dissociation of the SRP-FtsY complex into the individual components. This Rickettsia felis (strain ATCC VR-1525 / URRWXCal2) (Rickettsia azadi) protein is Signal recognition particle protein.